Here is a 118-residue protein sequence, read N- to C-terminus: Large ribosomal subunit protein bL20 (118 aa).

This sequence belongs to the bacterial ribosomal protein bL20 family.

In terms of biological role, binds directly to 23S ribosomal RNA and is necessary for the in vitro assembly process of the 50S ribosomal subunit. It is not involved in the protein synthesizing functions of that subunit. This is Large ribosomal subunit protein bL20 from Bacillus mycoides (strain KBAB4) (Bacillus weihenstephanensis).